The primary structure comprises 489 residues: Cobyric acid synthase (489 aa).

In terms of domain architecture, GATase cobBQ-type spans 251–444; sequence GLIIAVIRLP…LHGIFANDTF (194 aa). The active-site Nucleophile is the Cys-329. The active site involves His-436.

This sequence belongs to the CobB/CobQ family. CobQ subfamily.

Its pathway is cofactor biosynthesis; adenosylcobalamin biosynthesis. Its function is as follows. Catalyzes amidations at positions B, D, E, and G on adenosylcobyrinic A,C-diamide. NH(2) groups are provided by glutamine, and one molecule of ATP is hydrogenolyzed for each amidation. This chain is Cobyric acid synthase, found in Chloroflexus aurantiacus (strain ATCC 29366 / DSM 635 / J-10-fl).